The primary structure comprises 178 residues: Probable major fimbrial subunit LpfA (178 aa).

Residues 1 to 24 form the signal peptide; it reads MEFFMKKVVFALTALALTSGTVFA.

The protein belongs to the fimbrial protein family.

The protein resides in the fimbrium. In terms of biological role, part of the lpfABCC'DE fimbrial operon. LP fimbriae may participate in the interaction with eukaryotic cells by assisting in microcolony formation. The polypeptide is Probable major fimbrial subunit LpfA (lpfA) (Escherichia coli O157:H7).